Reading from the N-terminus, the 191-residue chain is MIDLSAPAIEVAPLLLGATIWRGPVGIRLTEVEAYMGLDDPASHAFRGPTPRARVMFGPPSHIYVYLSYGMHRCVNLVCSPDGEASAVLLRGGQVIAGHDDARRRRGNVAENRLACGPGNMGSALGASLEESGNPVSIIGNGAISALGWRLEPAPEIAEFRQGPRVGISRNIDAPWRWWIPQDPTVSGPRT.

It belongs to the DNA glycosylase MPG family.

In Cutibacterium acnes (strain DSM 16379 / KPA171202) (Propionibacterium acnes), this protein is Putative 3-methyladenine DNA glycosylase.